Here is a 59-residue protein sequence, read N- to C-terminus: Large ribosomal subunit protein bL32 (59 aa).

The protein belongs to the bacterial ribosomal protein bL32 family.

The sequence is that of Large ribosomal subunit protein bL32 from Synechococcus sp. (strain JA-2-3B'a(2-13)) (Cyanobacteria bacterium Yellowstone B-Prime).